The following is a 327-amino-acid chain: Transaldolase (327 aa).

K132 (schiff-base intermediate with substrate) is an active-site residue.

Belongs to the transaldolase family. Type 1 subfamily.

The protein resides in the cytoplasm. The catalysed reaction is D-sedoheptulose 7-phosphate + D-glyceraldehyde 3-phosphate = D-erythrose 4-phosphate + beta-D-fructose 6-phosphate. It participates in carbohydrate degradation; pentose phosphate pathway; D-glyceraldehyde 3-phosphate and beta-D-fructose 6-phosphate from D-ribose 5-phosphate and D-xylulose 5-phosphate (non-oxidative stage): step 2/3. Transaldolase is important for the balance of metabolites in the pentose-phosphate pathway. The polypeptide is Transaldolase (Chlamydia trachomatis serovar D (strain ATCC VR-885 / DSM 19411 / UW-3/Cx)).